Consider the following 43-residue polypeptide: Protein PsbN (43 aa).

Residues 7–27 form a helical membrane-spanning segment; the sequence is LSISIGVMVVAITGFSIYTAF.

The protein belongs to the PsbN family.

It localises to the cellular thylakoid membrane. Functionally, may play a role in photosystem I and II biogenesis. This chain is Protein PsbN, found in Trichodesmium erythraeum (strain IMS101).